We begin with the raw amino-acid sequence, 570 residues long: Adenine deaminase 2 (570 aa).

This sequence belongs to the metallo-dependent hydrolases superfamily. Adenine deaminase family. Mn(2+) serves as cofactor.

It catalyses the reaction adenine + H2O + H(+) = hypoxanthine + NH4(+). In Carboxydothermus hydrogenoformans (strain ATCC BAA-161 / DSM 6008 / Z-2901), this protein is Adenine deaminase 2.